Here is a 77-residue protein sequence, read N- to C-terminus: U9-lycotoxin-Ls1a (77 aa).

Positions 1-20 are cleaved as a signal peptide; sequence MKLLLFTALVLVVIVSLIEA. Residues 21–26 constitute a propeptide that is removed on maturation; that stretch reads EAENER.

It belongs to the neurotoxin 19 (CSTX) family. 08 (U8-Lctx) subfamily. Contains 4 disulfide bonds. As to expression, expressed by the venom gland.

It is found in the secreted. The chain is U9-lycotoxin-Ls1a from Lycosa singoriensis (Wolf spider).